A 118-amino-acid chain; its full sequence is Ribulose bisphosphate carboxylase small subunit (118 aa).

The protein belongs to the RuBisCO small chain family. In terms of assembly, heterohexadecamer of 8 large and 8 small subunits.

In terms of biological role, ruBisCO catalyzes two reactions: the carboxylation of D-ribulose 1,5-bisphosphate, the primary event in carbon dioxide fixation, as well as the oxidative fragmentation of the pentose substrate. Both reactions occur simultaneously and in competition at the same active site. Although the small subunit is not catalytic it is essential for maximal activity. This is Ribulose bisphosphate carboxylase small subunit from Thiobacillus denitrificans (strain ATCC 25259 / T1).